The primary structure comprises 154 residues: 6,7-dimethyl-8-ribityllumazine synthase (154 aa).

Residues Phe-22, 57–59 (VCE), and 81–83 (TVI) each bind 5-amino-6-(D-ribitylamino)uracil. 86–87 (KT) lines the (2S)-2-hydroxy-3-oxobutyl phosphate pocket. His-89 serves as the catalytic Proton donor. Val-114 contacts 5-amino-6-(D-ribitylamino)uracil. Arg-128 serves as a coordination point for (2S)-2-hydroxy-3-oxobutyl phosphate.

The protein belongs to the DMRL synthase family. Forms an icosahedral capsid composed of 60 subunits, arranged as a dodecamer of pentamers.

It catalyses the reaction (2S)-2-hydroxy-3-oxobutyl phosphate + 5-amino-6-(D-ribitylamino)uracil = 6,7-dimethyl-8-(1-D-ribityl)lumazine + phosphate + 2 H2O + H(+). It functions in the pathway cofactor biosynthesis; riboflavin biosynthesis; riboflavin from 2-hydroxy-3-oxobutyl phosphate and 5-amino-6-(D-ribitylamino)uracil: step 1/2. Functionally, catalyzes the formation of 6,7-dimethyl-8-ribityllumazine by condensation of 5-amino-6-(D-ribitylamino)uracil with 3,4-dihydroxy-2-butanone 4-phosphate. This is the penultimate step in the biosynthesis of riboflavin. The polypeptide is 6,7-dimethyl-8-ribityllumazine synthase (Wigglesworthia glossinidia brevipalpis).